The primary structure comprises 235 residues: MSHKRRGLVIYQDQKQQQQHPPGQSLSSISWSPTRRPHHPLKQQSTNSFSEILSKSSVQPNVQHDGNHMPISLLVLKQEHHKQQQQQQQRQNIRSQNSTPPLRQLVQESQWTSSASNSSLKKQEKQPQTFYNTDSKLVSQLHSSVKDLDAIIQTHKPKFDTIIRDFSQATILSSNELLIKLPKDQTIILHSRAPKINAEWLQNKVNDPSASLVIDSRSFLTLCNNIKWYLHWKFI.

Disordered stretches follow at residues 1–47 (MSHK…QSTN) and 78–128 (QEHH…KQPQ). Over residues 20–33 (HPPGQSLSSISWSP) the composition is skewed to polar residues. Over residues 84–98 (QQQQQQRQNIRSQNS) the composition is skewed to low complexity. Residues 106-128 (VQESQWTSSASNSSLKKQEKQPQ) show a composition bias toward polar residues.

This is an uncharacterized protein from Saccharomyces cerevisiae (strain ATCC 204508 / S288c) (Baker's yeast).